The following is a 187-amino-acid chain: MASLGSGNWSGVPTQSTAPMPWVTILQPFPWTVPSSQPQHNRVKEDLLELMMLQNAQMHQLLLGQLVADALNPGPEWPSPPVHTDSHEEQMEEEMEMQEQEPLVYHHHYLPCPVTPLGPMSLWPASFLPVPPHQPPWQGEPRIQHQPPASRQEEVRDVPPPPPPSATGTVGADVPPASDYYDAESLP.

The tract at residues 133–187 (HQPPWQGEPRIQHQPPASRQEEVRDVPPPPPPSATGTVGADVPPASDYYDAESLP) is disordered.

The polypeptide is Proline-rich protein 29 (Prr29) (Mus musculus (Mouse)).